We begin with the raw amino-acid sequence, 697 residues long: Sentrin-specific protease (697 aa).

The segment covering 1–14 has biased composition (basic and acidic residues); sequence MSRRSDLSDKDSQS. Disordered regions lie at residues 1–47 and 365–387; these read MSRR…QGLG and SEES…SDSY. The Nuclear localization signal signature appears at 15–19; sequence RKRHW. Positions 462 to 467 match the Nuclear localization signal motif; sequence KVEKKK. Residues 501–664 form a protease region; the sequence is IQICKKDLAT…VFSCQFGEWA (164 aa). Active-site residues include H585, D602, and C653.

This sequence belongs to the peptidase C48 family.

It localises to the nucleus envelope. Functionally, protease that deconjugates smo-1 from targeted proteins and may catalyze the processing of smo-1 to its mature form. This chain is Sentrin-specific protease (ulp-1), found in Caenorhabditis elegans.